A 442-amino-acid polypeptide reads, in one-letter code: UDP-N-acetylglucosamine 1-carboxyvinyltransferase (442 aa).

A phosphoenolpyruvate-binding site is contributed by 22 to 23; the sequence is KN. Position 94 (Arg94) interacts with UDP-N-acetyl-alpha-D-glucosamine. Asp119 serves as the catalytic Proton donor. 2 residues coordinate UDP-N-acetyl-alpha-D-glucosamine: Asp309 and Val331.

It belongs to the EPSP synthase family. MurA subfamily.

It localises to the cytoplasm. The catalysed reaction is phosphoenolpyruvate + UDP-N-acetyl-alpha-D-glucosamine = UDP-N-acetyl-3-O-(1-carboxyvinyl)-alpha-D-glucosamine + phosphate. It participates in cell wall biogenesis; peptidoglycan biosynthesis. In terms of biological role, cell wall formation. Adds enolpyruvyl to UDP-N-acetylglucosamine. The sequence is that of UDP-N-acetylglucosamine 1-carboxyvinyltransferase from Chlamydia muridarum (strain MoPn / Nigg).